Consider the following 881-residue polypeptide: DNA replication helicase (881 aa).

Position 90–97 (90–97) interacts with ATP; sequence GNAGSGKS.

This sequence belongs to the herpesviridae helicase family. Associates with the primase and the primase-associated factor to form the helicase-primase complex.

It is found in the host nucleus. Component of the helicase/primase complex. Unwinds the DNA at the replication forks and generates single-stranded DNA for both leading and lagging strand synthesis. The primase synthesizes short RNA primers on the lagging strand that the polymerase elongates using dNTPs. Possesses helicase-like motifs and therefore may act as the helicase subunit of the complex. The protein is DNA replication helicase of Homo sapiens (Human).